Consider the following 149-residue polypeptide: MERTFIAIKPDGVQRGLVGSIIQRLESRGYQLVGLKLVQVSQELAEAHYAEHRERPFFPGLVKFITSGPVVAMVWQGKGVIAAARKLIGKTNPLDAEPGTIRGDFGIDIGRNLVHGSDGPETAQREIALWFQESELVNWTPATQSWIYE.

ATP is bound by residues Lys-9, Phe-57, Arg-85, Thr-91, Arg-102, and Asn-112. His-115 (pros-phosphohistidine intermediate) is an active-site residue.

The protein belongs to the NDK family. As to quaternary structure, homotetramer. Requires Mg(2+) as cofactor.

Its subcellular location is the cytoplasm. The enzyme catalyses dZDP + ATP = dZTP + ADP. It catalyses the reaction a 2'-deoxyribonucleoside 5'-diphosphate + ATP = a 2'-deoxyribonucleoside 5'-triphosphate + ADP. The catalysed reaction is a ribonucleoside 5'-diphosphate + ATP = a ribonucleoside 5'-triphosphate + ADP. The protein operates within purine metabolism. In terms of biological role, major role in the synthesis of nucleoside triphosphates other than ATP. The ATP gamma phosphate is transferred to the NDP beta phosphate via a ping-pong mechanism, using a phosphorylated active-site intermediate. Its function is as follows. (Microbial infection) Catalyzes the phosphorylation of dZDP to dZTP, when the bacterium is infected by a phage that produces the substrate for the synthesis of dZTP (2- amino-2'-deoxyadenosine 5'-triphosphate), which is then used by the phage as a DNA polymerase substrate. The chain is Nucleoside diphosphate kinase from Synechococcus sp. (strain JA-3-3Ab) (Cyanobacteria bacterium Yellowstone A-Prime).